Consider the following 806-residue polypeptide: DNA topoisomerase 4 subunit A (806 aa).

Residues 33–499 (LPDARDGLKP…EEIKINLEVM (467 aa)) form the Topo IIA-type catalytic domain. The O-(5'-phospho-DNA)-tyrosine intermediate role is filled by Tyr-121.

It belongs to the type II topoisomerase GyrA/ParC subunit family. ParC type 2 subfamily. As to quaternary structure, heterotetramer composed of ParC and ParE.

It localises to the cell membrane. The protein resides in the cytoplasm. It catalyses the reaction ATP-dependent breakage, passage and rejoining of double-stranded DNA.. In terms of biological role, topoisomerase IV is essential for chromosome segregation. It relaxes supercoiled DNA. Performs the decatenation events required during the replication of a circular DNA molecule. The polypeptide is DNA topoisomerase 4 subunit A (Bacillus subtilis (strain 168)).